The primary structure comprises 1105 residues: Lysylphosphatidylglycerol biosynthesis bifunctional protein LysX (1105 aa).

A phosphatidylglycerol lysyltransferase region spans residues 1–603 (MTVTKPRSVQ…LLHHDGSAPD (603 aa)). A run of 7 helical transmembrane segments spans residues 20–40 (VPAA…LASI), 62–82 (FPDT…ALAA), 86–106 (IAWL…AADI), 117–137 (FGEN…VLGY), 154–174 (AVLV…VELF), 186–203 (YVAN…DLFT), and 208–228 (VFLN…ATIV). The interval 604–1105 (VSGLRQSAIA…TLPFPLAKPH (502 aa)) is lysine--tRNA ligase. Mg(2+)-binding residues include D1017 and E1024.

The protein in the N-terminal section; belongs to the LPG synthetase family. It in the C-terminal section; belongs to the class-II aminoacyl-tRNA synthetase family. Mg(2+) is required as a cofactor.

Its subcellular location is the cell membrane. It carries out the reaction tRNA(Lys) + L-lysine + ATP = L-lysyl-tRNA(Lys) + AMP + diphosphate. The enzyme catalyses L-lysyl-tRNA(Lys) + a 1,2-diacyl-sn-glycero-3-phospho-(1'-sn-glycerol) = a 1,2-diacyl-sn-glycero-3-phospho-1'-(3'-O-L-lysyl)-sn-glycerol + tRNA(Lys). In terms of biological role, catalyzes the production of L-lysyl-tRNA(Lys)transfer and the transfer of a lysyl group from L-lysyl-tRNA(Lys) to membrane-bound phosphatidylglycerol (PG), which produces lysylphosphatidylglycerol (LPG), one of the components of the bacterial membrane with a positive net charge. LPG synthesis contributes to the resistance to cationic antimicrobial peptides (CAMPs) and likely protects M.tuberculosis against the CAMPs produced by competiting microorganisms (bacteriocins). In fact, the modification of anionic phosphatidylglycerol with positively charged L-lysine results in repulsion of the peptides. This Mycobacterium marinum (strain ATCC BAA-535 / M) protein is Lysylphosphatidylglycerol biosynthesis bifunctional protein LysX (lysX).